The chain runs to 360 residues: 45 kDa calcium-binding protein (360 aa).

The signal sequence occupies residues 1 to 29 (MVSKQAFLFSLGSLYLSLLFIFLLMDVYA). N-linked (GlcNAc...) asparagine glycosylation occurs at N33. EF-hand domains follow at residues 96-131 (RNRRKLAAIFAKVDRNEDKQISASEMQRWIMEKTEE), 135-170 (EAVNENKLHFRAVDPDGDGHVSWDEYKIKFLASKGF), 231-266 (MLKFMVKEIIRDLDQDGDKKLTLSEFISLPVGTVEN), 276-311 (WVRDRKKEYEEVIDANHDGIVTMEELEEYMDPMNEY), and 312-347 (NALNEAKQMIAVADENQDHLLSLEEILKYSEYFTGS). Ca(2+)-binding residues include D109, N111, D113, Q115, E120, D148, D150, D152, H154, E159, D244, D246, D248, K250, E255, D289, N291, D293, E300, D325, N327, D329, and E336.

This sequence belongs to the CREC family.

It localises to the golgi apparatus lumen. Its function is as follows. May regulate calcium-dependent activities in the endoplasmic reticulum lumen or post-ER compartment. The polypeptide is 45 kDa calcium-binding protein (sdf4) (Xenopus laevis (African clawed frog)).